The following is a 161-amino-acid chain: AP-1 complex subunit sigma-1 (161 aa).

The protein belongs to the adaptor complexes small subunit family. In terms of assembly, adaptor protein complex 1 (AP-1) is a heterotetramer composed of two large adaptins (gamma-type subunit and beta-type subunit), a medium adaptin (mu-type subunit) and a small adaptin (sigma-type subunit). In terms of tissue distribution, expressed in seedlings, roots, stems, leaves, flowers and siliques (developing fruits and seeds).

The protein resides in the golgi apparatus. It localises to the cytoplasmic vesicle. It is found in the clathrin-coated vesicle membrane. Its function is as follows. Subunit of clathrin-associated adaptor protein complex 1 that plays a role in protein sorting at the trans-Golgi network and early endosomes (TGN/EE). The AP complexes mediate the recruitment of clathrin to membranes and the recognition of sorting signals within the cytosolic tails of transmembrane cargo molecules. The protein is AP-1 complex subunit sigma-1 (AAP19-1) of Arabidopsis thaliana (Mouse-ear cress).